The following is a 292-amino-acid chain: Potassium channel, subfamily K, member 16 (292 aa).

Topologically, residues 1-13 (MPRAGVCGCWGGQ) are cytoplasmic. The helical transmembrane segment at 14–34 (VLPLLLAYICYLLLGATIFQL) threads the bilayer. Positions 98–116 (SFFFAGTVVTTIGYGNLAP) form an intramembrane region, pore-forming. The K(+) site is built by T108, I109, G110, and Y111. Positions 108–113 (TIGYGN) are selectivity filter 1. The chain crosses the membrane as a helical span at residues 120–140 (AGQVFCVFYALMGIPLNVVFL). The Cytoplasmic segment spans residues 141-165 (NHLGTGLRAHLTTLDRWEDHPRHSQ). A helical membrane pass occupies residues 166-186 (LLQVLGLALFLTLGTLVILIF). The segment at residues 202–221 (GFYFAFITLSTIGFGDYVVG) is an intramembrane region (pore-forming). K(+) contacts are provided by T212, I213, G214, and F215. The selectivity filter 2 stretch occupies residues 212–217 (TIGFGD). Residues 238-258 (IWILLGLAWLAVVLSLGSLLL) form a helical membrane-spanning segment. The Cytoplasmic segment spans residues 259-292 (HRCSRLWQLIRGLDLKDGAAPDSEPRSQKIPISA).

The protein belongs to the two pore domain potassium channel (TC 1.A.1.8) family. As to quaternary structure, homodimer; disulfide-linked. Heterodimer with KCNK17 and KCNK5. As to expression, expressed in pacreatic beta-cells (at protein level). Expressed in pacreatic delta-cells (at protein level).

The protein localises to the cell membrane. It is found in the endoplasmic reticulum membrane. It localises to the mitochondrion inner membrane. The catalysed reaction is K(+)(in) = K(+)(out). The enzyme catalyses Rb(+)(in) = Rb(+)(out). It catalyses the reaction Cs(+)(in) = Cs(+)(out). Functionally, k(+) channel that conducts voltage-dependent outward rectifying currents upon membrane depolarization. Voltage sensing is coupled to K(+) electrochemical gradient in an 'ion flux gating' mode where outward but not inward ion flow opens the gate. Homo- and heterodimerizes to form functional channels with distinct regulatory and gating properties. In pancreatic islets, conducts K(+) countercurrents for Ca(2+) release from the endoplasmic reticulum (ER) and regulates the frequency and duration of cytosolic Ca(2+) oscillations coupled to secretion of pancreatic hormones. In pancreatic beta cells, drives ER Ca(2+) efflux, which in turn activates Ca(2+)-dependent plasma membrane K(+) slow currents and cytosolic Ca(2+) influx, overall contributing to synchronous cytosolic Ca(2+) oscillations. Limits glucose-induced cytosolic Ca(2+) oscillations coupled to second-phase INS secretion. Contributes to beta cell adaptation to acute inflammation by maintaining normal cytosolic Ca(2+) levels and INS secretion. May regulate beta cell mitochondrial Ca(2+) levels either indirectly via ER Ca(2+) efflux or directly by hyperpolarizing the mitochondrial membrane potential. Limits mitochondrial Ca(2+) oscillations and ATP production involved in glucose homeostasis upon metabolic stress. In pancreatic delta cells, limits Ca(2+)-induced Ca(2+)-release involved in somatostatin secretion and modulates islet paracrine signaling involved in glucagon secretion. Permeable to other monovalent cations such as Rb(+) and Cs(+). This is Potassium channel, subfamily K, member 16 from Mus musculus (Mouse).